Here is a 493-residue protein sequence, read N- to C-terminus: MSHILAIDQGTTSSRAMVFDASLSLKSVAQEEFPQIYPRPGWVEHDPTDLWSSVAATARAAVERAEIDGSLAAIGITNQRETVVIWERATGHPIHNAIVWQDRRTADLCQSLAEAGQEPMITERTGLLLDPYFSATKVKWLLDHVEGARARARRGELLFGTVDSYLIWKLTGGRSHVTDATNAARTMLFDIRRGEWDAEICGLLDIPMEMLPEVKDCAAPFGMTRADLFGREIPILGVAGDQQAATCGQACFRPGMMKSTYGTGCFALLNTGAERVTSRSRLLTTIAYQLGGQRTYALEGSIFIAGAVVQWLRDGLKIIREAGETHGLATASDAAQDLVIVPAFTGLGAPWWKPDSRGAVFGLTRNSGPAEFARAALESVGYQTRDLLEAMRADWAAGAEGVLRVDGGMTASDWSMQFLADIIGAPVDRPVVRETTALGAAWLAGMQAGLCPGPEEFAAGWALERRFEPRMEAATRDAKYARWGRAVRAVMAV.

Thr-11 lines the ADP pocket. ATP-binding residues include Thr-11, Thr-12, and Ser-13. Position 11 (Thr-11) interacts with sn-glycerol 3-phosphate. Arg-15 is a binding site for ADP. Positions 80, 81, 132, and 241 each coordinate sn-glycerol 3-phosphate. Glycerol is bound by residues Arg-80, Glu-81, Tyr-132, Asp-241, and Gln-242. Positions 263 and 306 each coordinate ADP. Positions 263, 306, 310, and 408 each coordinate ATP. Gly-408 is an ADP binding site.

The protein belongs to the FGGY kinase family.

The catalysed reaction is glycerol + ATP = sn-glycerol 3-phosphate + ADP + H(+). It participates in polyol metabolism; glycerol degradation via glycerol kinase pathway; sn-glycerol 3-phosphate from glycerol: step 1/1. Inhibited by fructose 1,6-bisphosphate (FBP). Key enzyme in the regulation of glycerol uptake and metabolism. Catalyzes the phosphorylation of glycerol to yield sn-glycerol 3-phosphate. The chain is Glycerol kinase from Cereibacter sphaeroides (strain ATCC 17025 / ATH 2.4.3) (Rhodobacter sphaeroides).